Here is a 134-residue protein sequence, read N- to C-terminus: Prefoldin subunit alpha (134 aa).

The protein belongs to the prefoldin subunit alpha family. As to quaternary structure, heterohexamer of two alpha and four beta subunits.

It is found in the cytoplasm. Its function is as follows. Molecular chaperone capable of stabilizing a range of proteins. Seems to fulfill an ATP-independent, HSP70-like function in archaeal de novo protein folding. The protein is Prefoldin subunit alpha of Pyrobaculum calidifontis (strain DSM 21063 / JCM 11548 / VA1).